The sequence spans 286 residues: Bifunctional protein FolD (286 aa).

NADP(+) contacts are provided by residues 165–167 (GRS) and Ser190.

It belongs to the tetrahydrofolate dehydrogenase/cyclohydrolase family. As to quaternary structure, homodimer.

The catalysed reaction is (6R)-5,10-methylene-5,6,7,8-tetrahydrofolate + NADP(+) = (6R)-5,10-methenyltetrahydrofolate + NADPH. The enzyme catalyses (6R)-5,10-methenyltetrahydrofolate + H2O = (6R)-10-formyltetrahydrofolate + H(+). It participates in one-carbon metabolism; tetrahydrofolate interconversion. Its function is as follows. Catalyzes the oxidation of 5,10-methylenetetrahydrofolate to 5,10-methenyltetrahydrofolate and then the hydrolysis of 5,10-methenyltetrahydrofolate to 10-formyltetrahydrofolate. The sequence is that of Bifunctional protein FolD from Staphylococcus epidermidis (strain ATCC 12228 / FDA PCI 1200).